The sequence spans 118 residues: Ribonuclease P protein component (118 aa).

The protein belongs to the RnpA family. As to quaternary structure, consists of a catalytic RNA component (M1 or rnpB) and a protein subunit.

The enzyme catalyses Endonucleolytic cleavage of RNA, removing 5'-extranucleotides from tRNA precursor.. In terms of biological role, RNaseP catalyzes the removal of the 5'-leader sequence from pre-tRNA to produce the mature 5'-terminus. It can also cleave other RNA substrates such as 4.5S RNA. The protein component plays an auxiliary but essential role in vivo by binding to the 5'-leader sequence and broadening the substrate specificity of the ribozyme. In Shewanella baltica (strain OS155 / ATCC BAA-1091), this protein is Ribonuclease P protein component.